The chain runs to 394 residues: Queuine tRNA-ribosyltransferase (394 aa).

Catalysis depends on Asp-95, which acts as the Proton acceptor. Residues 95-99 (DSGGF), Asp-149, Gln-190, and Gly-217 each bind substrate. Positions 248–254 (GVGTPID) are RNA binding. Asp-267 functions as the Nucleophile in the catalytic mechanism. Positions 272–276 (TRNAR) are RNA binding; important for wobble base 34 recognition. Zn(2+) is bound by residues Cys-305, Cys-307, Cys-310, and His-337. Positions 375–394 (NDANETVGATESTESTESTE) are disordered.

This sequence belongs to the queuine tRNA-ribosyltransferase family. In terms of assembly, homodimer. Within each dimer, one monomer is responsible for RNA recognition and catalysis, while the other monomer binds to the replacement base PreQ1. Zn(2+) is required as a cofactor.

It catalyses the reaction 7-aminomethyl-7-carbaguanine + guanosine(34) in tRNA = 7-aminomethyl-7-carbaguanosine(34) in tRNA + guanine. It participates in tRNA modification; tRNA-queuosine biosynthesis. Functionally, catalyzes the base-exchange of a guanine (G) residue with the queuine precursor 7-aminomethyl-7-deazaguanine (PreQ1) at position 34 (anticodon wobble position) in tRNAs with GU(N) anticodons (tRNA-Asp, -Asn, -His and -Tyr). Catalysis occurs through a double-displacement mechanism. The nucleophile active site attacks the C1' of nucleotide 34 to detach the guanine base from the RNA, forming a covalent enzyme-RNA intermediate. The proton acceptor active site deprotonates the incoming PreQ1, allowing a nucleophilic attack on the C1' of the ribose to form the product. After dissociation, two additional enzymatic reactions on the tRNA convert PreQ1 to queuine (Q), resulting in the hypermodified nucleoside queuosine (7-(((4,5-cis-dihydroxy-2-cyclopenten-1-yl)amino)methyl)-7-deazaguanosine). In Sorangium cellulosum (strain So ce56) (Polyangium cellulosum (strain So ce56)), this protein is Queuine tRNA-ribosyltransferase.